The primary structure comprises 68 residues: Small integral membrane protein 10-like protein 1 (68 aa).

The segment at 1-21 (MAPAAAPSSLAVRASSPAATP) is disordered.

The sequence is that of Small integral membrane protein 10-like protein 1 from Homo sapiens (Human).